The chain runs to 192 residues: Ion-translocating oxidoreductase complex subunit A (192 aa).

The next 6 membrane-spanning stretches (helical) occupy residues 5-25 (LLLL…FLGL), 39-59 (IGMS…SYLV), 65-85 (LPFD…AVVV), 102-122 (ALGI…VALL), 134-154 (AIFG…FSAM), and 171-191 (AIAM…TGLV).

It belongs to the NqrDE/RnfAE family. In terms of assembly, the complex is composed of six subunits: RnfA, RnfB, RnfC, RnfD, RnfE and RnfG.

It is found in the cell inner membrane. In terms of biological role, part of a membrane-bound complex that couples electron transfer with translocation of ions across the membrane. The polypeptide is Ion-translocating oxidoreductase complex subunit A (Shewanella pealeana (strain ATCC 700345 / ANG-SQ1)).